The chain runs to 186 residues: uncharacterized protein (186 aa).

This is an uncharacterized protein from Acanthamoeba polyphaga mimivirus (APMV).